Here is a 359-residue protein sequence, read N- to C-terminus: tRNA-specific 2-thiouridylase MnmA (359 aa).

ATP is bound by residues 6–13 (AMSGGVDS) and Leu32. The active-site Nucleophile is the Cys101. A disulfide bond links Cys101 and Cys193. ATP is bound at residue Gly125. The interval 143-145 (KDQ) is interaction with tRNA. Cys193 functions as the Cysteine persulfide intermediate in the catalytic mechanism.

The protein belongs to the MnmA/TRMU family.

The protein localises to the cytoplasm. The catalysed reaction is S-sulfanyl-L-cysteinyl-[protein] + uridine(34) in tRNA + AH2 + ATP = 2-thiouridine(34) in tRNA + L-cysteinyl-[protein] + A + AMP + diphosphate + H(+). Catalyzes the 2-thiolation of uridine at the wobble position (U34) of tRNA, leading to the formation of s(2)U34. The protein is tRNA-specific 2-thiouridylase MnmA of Mycobacterium sp. (strain JLS).